We begin with the raw amino-acid sequence, 90 residues long: Small ribosomal subunit protein bS16 (90 aa).

This sequence belongs to the bacterial ribosomal protein bS16 family.

The protein is Small ribosomal subunit protein bS16 of Lactobacillus delbrueckii subsp. bulgaricus (strain ATCC 11842 / DSM 20081 / BCRC 10696 / JCM 1002 / NBRC 13953 / NCIMB 11778 / NCTC 12712 / WDCM 00102 / Lb 14).